The chain runs to 148 residues: 3-dehydroquinate dehydratase (148 aa).

The active-site Proton acceptor is tyrosine 23. Substrate-binding residues include asparagine 75, histidine 81, and aspartate 88. The active-site Proton donor is histidine 101. Substrate is bound by residues 102–103 (LS) and arginine 112.

This sequence belongs to the type-II 3-dehydroquinase family. Homododecamer.

It catalyses the reaction 3-dehydroquinate = 3-dehydroshikimate + H2O. Its pathway is metabolic intermediate biosynthesis; chorismate biosynthesis; chorismate from D-erythrose 4-phosphate and phosphoenolpyruvate: step 3/7. In terms of biological role, catalyzes a trans-dehydration via an enolate intermediate. The chain is 3-dehydroquinate dehydratase from Xanthomonas axonopodis pv. citri (strain 306).